Consider the following 255-residue polypeptide: 4-hydroxy-tetrahydrodipicolinate reductase (255 aa).

Residues 8 to 13, 88 to 90, and 112 to 115 each bind NAD(+); these read GATGRV, GTT, and ATNM. Histidine 144 (proton donor/acceptor) is an active-site residue. Histidine 145 contributes to the (S)-2,3,4,5-tetrahydrodipicolinate binding site. Residue lysine 148 is the Proton donor of the active site. A (S)-2,3,4,5-tetrahydrodipicolinate-binding site is contributed by 154 to 155; the sequence is GT.

Belongs to the DapB family.

It is found in the cytoplasm. It catalyses the reaction (S)-2,3,4,5-tetrahydrodipicolinate + NAD(+) + H2O = (2S,4S)-4-hydroxy-2,3,4,5-tetrahydrodipicolinate + NADH + H(+). The enzyme catalyses (S)-2,3,4,5-tetrahydrodipicolinate + NADP(+) + H2O = (2S,4S)-4-hydroxy-2,3,4,5-tetrahydrodipicolinate + NADPH + H(+). It functions in the pathway amino-acid biosynthesis; L-lysine biosynthesis via DAP pathway; (S)-tetrahydrodipicolinate from L-aspartate: step 4/4. Functionally, catalyzes the conversion of 4-hydroxy-tetrahydrodipicolinate (HTPA) to tetrahydrodipicolinate. The polypeptide is 4-hydroxy-tetrahydrodipicolinate reductase (Helicobacter hepaticus (strain ATCC 51449 / 3B1)).